We begin with the raw amino-acid sequence, 82 residues long: Beta-defensin 113 (82 aa).

The N-terminal stretch at 1–16 (MKILCIFLTFVFTVSC) is a signal peptide. Cystine bridges form between cysteine 35–cysteine 61, cysteine 42–cysteine 56, and cysteine 46–cysteine 62.

This sequence belongs to the beta-defensin family.

Its subcellular location is the secreted. Functionally, has antibacterial activity. The chain is Beta-defensin 113 (DEFB113) from Homo sapiens (Human).